The following is a 641-amino-acid chain: Chaperone protein DnaK (641 aa).

Residue Thr200 is modified to Phosphothreonine; by autocatalysis. The span at 605–623 (AAEQGGSADAASGNAQASK) shows a compositional bias: low complexity. The segment at 605 to 628 (AAEQGGSADAASGNAQASKAADDV) is disordered.

Belongs to the heat shock protein 70 family.

Functionally, acts as a chaperone. In Xanthomonas oryzae pv. oryzae (strain KACC10331 / KXO85), this protein is Chaperone protein DnaK.